The sequence spans 412 residues: Phosphoribosylamine--glycine ligase (412 aa).

Residues 108-309 form the ATP-grasp domain; the sequence is KSIMKKYGVP…LAQAIIDILA (202 aa). Residue 134 to 190 participates in ATP binding; that stretch reads LDEKGVPLVIKADGLAAGKGVTVAFDIETAKSALADIFSGSQGKVVIEEFLDGEEFS. Mg(2+) contacts are provided by Glu-279 and Asn-281.

This sequence belongs to the GARS family. Mg(2+) serves as cofactor. Mn(2+) is required as a cofactor.

The enzyme catalyses 5-phospho-beta-D-ribosylamine + glycine + ATP = N(1)-(5-phospho-beta-D-ribosyl)glycinamide + ADP + phosphate + H(+). It participates in purine metabolism; IMP biosynthesis via de novo pathway; N(1)-(5-phospho-D-ribosyl)glycinamide from 5-phospho-alpha-D-ribose 1-diphosphate: step 2/2. The sequence is that of Phosphoribosylamine--glycine ligase from Lactococcus lactis subsp. lactis (strain IL1403) (Streptococcus lactis).